The sequence spans 560 residues: MRIEPGDSFWTKKAMFSNAERQYFETVRPRKTSLPGSTAPNIAAPVTKATKKNKTMAEMMPNKLLYMNPLTMEAHFFLQTLNSVNQTTNPPQLDPHLANLLERIMVGIESYLDRNPTYVLPQEMAAPGEGVAFVQPQELQTIKRTFSCSSCSNRIVGTTIAKAVAHLSEQHPKPNPNNQPVQPHPTHQTKQEKKQAQVKARQHITVRLPKKARAMIVGEITNVFKDKYPIADKLKVIPEYDVIEQDLCKLLSPGFPKQPLRVYKFGSRITGIGNRSSDLDLFVDIGNTFHTFEHRASNATVAKLRAMRKFFCDSEDWRLINFIEQARVPIIKTCHLPTGIECDICLNSMGFCNTNLLKYIFESQPLTQYMCIYVKNWLERCKLTEQISTYSITLMVIYFLQLQALLPPIAMLQIEDAANQAVLVGPWVVNFAQKSFSELGLQQLKATVPVIKGFLRNFFAYFAKFDYEHFLVCPYIGQANVEIAKIERMLHARYSAYVSDNPECSIQLKKPMVVQDPIQLNHNVTKAVTKYGLQTFVDYCQQTAELLEEPSTNWRQRYAF.

Residues glutamate 169–glutamine 197 are disordered. Low complexity predominate over residues proline 176 to glutamine 188. Mg(2+)-binding residues include aspartate 278 and aspartate 280. A PAP-associated domain is found at leucine 455–histidine 522.

It depends on Mg(2+) as a cofactor.

It is found in the cytoplasm. It carries out the reaction RNA(n) + UTP = RNA(n)-3'-uridine ribonucleotide + diphosphate. In terms of biological role, uridylyltransferase which mediates terminal uridylation of miRNAs, leading to their degradation. Has high specificity for splicing-derived miRNAs (mirtrons) and other miRNA substrates containing a 3'-G terminal nucleotide. Appears to be a major suppressor of mirtron biogenesis. In Drosophila melanogaster (Fruit fly), this protein is Terminal uridylyltransferase Tailor.